Consider the following 400-residue polypeptide: Na(+)/H(+) antiporter NhaA (400 aa).

Helical transmembrane passes span 18-38, 68-88, 105-125, 133-153, 163-183, 186-206, 211-231, 232-252, 267-287, 305-325, 338-358, and 372-392; these read LATE…AIII, VHMW…GLEI, LPAL…LAVS, GGWA…LALL, VMLV…IAVF, SSIN…LLAF, VVAL…TLLS, GVHA…SAGS, GLAP…NAGV, IALG…LLAV, WLQI…SLFI, and AAKI…CVIL.

Belongs to the NhaA Na(+)/H(+) (TC 2.A.33) antiporter family.

It localises to the cell inner membrane. It carries out the reaction Na(+)(in) + 2 H(+)(out) = Na(+)(out) + 2 H(+)(in). Functionally, na(+)/H(+) antiporter that extrudes sodium in exchange for external protons. The sequence is that of Na(+)/H(+) antiporter NhaA from Pseudomonas entomophila (strain L48).